The following is a 264-amino-acid chain: 1-(5-phosphoribosyl)-5-[(5-phosphoribosylamino)methylideneamino] imidazole-4-carboxamide isomerase (264 aa).

This sequence belongs to the HisA/HisF family.

Its subcellular location is the cytoplasm. It carries out the reaction 1-(5-phospho-beta-D-ribosyl)-5-[(5-phospho-beta-D-ribosylamino)methylideneamino]imidazole-4-carboxamide = 5-[(5-phospho-1-deoxy-D-ribulos-1-ylimino)methylamino]-1-(5-phospho-beta-D-ribosyl)imidazole-4-carboxamide. Its pathway is amino-acid biosynthesis; L-histidine biosynthesis; L-histidine from 5-phospho-alpha-D-ribose 1-diphosphate: step 4/9. The polypeptide is 1-(5-phosphoribosyl)-5-[(5-phosphoribosylamino)methylideneamino] imidazole-4-carboxamide isomerase (HIS6) (Yarrowia lipolytica (strain CLIB 122 / E 150) (Yeast)).